Reading from the N-terminus, the 395-residue chain is Endophilin-B2 (395 aa).

Methionine 1 is subject to N-acetylmethionine. Positions 1 to 27 are membrane-binding amphipathic helix; the sequence is MDFNMKKLASDAGIFFTRAVQFTEEKF. Phosphoserine is present on serine 10. Positions 24–287 constitute a BAR domain; that stretch reads EEKFGQAEKT…LGRFPGTFVG (264 aa). Coiled coils occupy residues 116–132 and 206–240; these read IKVAEAEKQLGAAERDF and ASALWNDEVDKAEQELRVAQTEFDRQAEVTRLLLE. Positions 335–395 constitute an SH3 domain; it reads SGTRKARVLY…VPVTYLELLS (61 aa). At serine 395 the chain carries Phosphoserine.

It belongs to the endophilin family. Homodimer, and heterodimer with SH3GLB1. As to expression, detected in skeletal muscle, adipocyte, brain, lung, colon and mammary gland.

It localises to the cytoplasm. This is Endophilin-B2 (SH3GLB2) from Homo sapiens (Human).